Reading from the N-terminus, the 69-residue chain is Large ribosomal subunit protein uL29 (69 aa).

It belongs to the universal ribosomal protein uL29 family.

The protein is Large ribosomal subunit protein uL29 of Rhodopseudomonas palustris (strain TIE-1).